The primary structure comprises 104 residues: Nucleoid-associated protein Dtur_0258 (104 aa).

The segment at 84–104 is disordered; the sequence is EKSAEKMGSLTDGLPLPPGLF.

The protein belongs to the YbaB/EbfC family. Homodimer.

It localises to the cytoplasm. The protein resides in the nucleoid. Functionally, binds to DNA and alters its conformation. May be involved in regulation of gene expression, nucleoid organization and DNA protection. The sequence is that of Nucleoid-associated protein Dtur_0258 from Dictyoglomus turgidum (strain DSM 6724 / Z-1310).